A 693-amino-acid chain; its full sequence is eEF1A lysine and N-terminal methyltransferase (693 aa).

This sequence belongs to the methyltransferase superfamily.

The catalysed reaction is L-lysyl-[protein] + S-adenosyl-L-methionine = N(6)-methyl-L-lysyl-[protein] + S-adenosyl-L-homocysteine + H(+). It carries out the reaction N(6)-methyl-L-lysyl-[protein] + S-adenosyl-L-methionine = N(6),N(6)-dimethyl-L-lysyl-[protein] + S-adenosyl-L-homocysteine + H(+). The enzyme catalyses N-terminal glycyl-L-lysyl-L-glutamyl-[protein] + 3 S-adenosyl-L-methionine = N-terminal N,N,N-trimethyl-glycyl-L-lysyl-L-glutamyl-[protein] + 3 S-adenosyl-L-homocysteine + 3 H(+). Dual methyltransferase that catalyzes methylation of elongation factor 1-alpha (eef1a1 and eef1a2) at two different positions, and is therefore involved in the regulation of mRNA translation. Via its C-terminus, methylates the N-terminus of eef1a1 and eef1a2. Via its N-terminus dimethylates lysine residues of eef1a1 and eef1a2. The sequence is that of eEF1A lysine and N-terminal methyltransferase (mettl13) from Xenopus laevis (African clawed frog).